The sequence spans 188 residues: Peptidyl-tRNA hydrolase (188 aa).

Residue tyrosine 14 participates in tRNA binding. Histidine 19 acts as the Proton acceptor in catalysis. TRNA-binding residues include tyrosine 64, asparagine 66, and asparagine 112.

This sequence belongs to the PTH family. In terms of assembly, monomer.

Its subcellular location is the cytoplasm. The enzyme catalyses an N-acyl-L-alpha-aminoacyl-tRNA + H2O = an N-acyl-L-amino acid + a tRNA + H(+). Functionally, hydrolyzes ribosome-free peptidyl-tRNAs (with 1 or more amino acids incorporated), which drop off the ribosome during protein synthesis, or as a result of ribosome stalling. In terms of biological role, catalyzes the release of premature peptidyl moieties from peptidyl-tRNA molecules trapped in stalled 50S ribosomal subunits, and thus maintains levels of free tRNAs and 50S ribosomes. In Clostridium perfringens (strain ATCC 13124 / DSM 756 / JCM 1290 / NCIMB 6125 / NCTC 8237 / Type A), this protein is Peptidyl-tRNA hydrolase.